We begin with the raw amino-acid sequence, 141 residues long: Hemoglobin subunit alpha-D (141 aa).

The 141-residue stretch at 1–141 (MLSADDKKII…VAAVLAEKYR (141 aa)) folds into the Globin domain. Residues H58 and H87 each contribute to the heme b site.

Belongs to the globin family. Heterotetramer of two alpha-D chains and two beta chains. As to expression, red blood cells.

Its function is as follows. Involved in oxygen transport from the lung to the various peripheral tissues. In Anser indicus (Bar-headed goose), this protein is Hemoglobin subunit alpha-D (HBAD).